A 351-amino-acid polypeptide reads, in one-letter code: uncharacterized protein (351 aa).

An N-terminal signal peptide occupies residues 1 to 27; the sequence is MKNKKRVLIASSLSCAILLLSAATTQA. A disordered region spans residues 27–71; the sequence is ANSAHKDSQDQNKKEHVDKSQQKDKRNVTNKDKNSTAPDDIGKNG. Basic and acidic residues predominate over residues 30–60; it reads AHKDSQDQNKKEHVDKSQQKDKRNVTNKDKN.

It belongs to the aerolysin family.

This is an uncharacterized protein from Staphylococcus aureus (strain USA300).